Reading from the N-terminus, the 560-residue chain is MNNNIINLIAAIILSLSIIFGWQYFVVKPEQKKQQQQIAVQKAENLKKQQLKALVEPATDIVVQEESGVQRIKIESESLTGSISLKGLRFDDLILKKYKQDLSNNSPEVRLFSPANTENAYFAEIGLVSNLSSVKLPNNDTIWNSDSEILSPEKPVNLFWVNEDGVKFLVTITVDENYLFTIEQTIVNNSDKELPIQSYGLINRKYTAVEKAVNILHQGPIGCIDENLKEYSYDDIKDKKSEKFAASKVDWIGITDKYWLSSLIPDKSSNYSSNFNYALKQGTERYQVDFISPVQIIKPGENFSIKSRIFAGAKKVDLLDKYEKQYDIKLFDRAIDFGWFYIITKPVFYAMNFFYGYVGNFGVSILIVTVIIKLLMFTLANKSYRSMKKMKNLQPEIDRIKNLYSDDKARLNQEIMALYKKEKVNPVAGCLPILVQIPLFFSIYKVLYVTIEMRQVPFYGWIKDLSAPDPTTIFNLFGLLPFSPPSFLMIGAWPILMAITMFLQQKMSPEPADPMQAQVMKFMPLIFLFMFSSFPVGLLIYWSWNNILSIIQQYYINKFN.

6 helical membrane-spanning segments follow: residues Ile-5–Phe-25, Ala-334–Phe-354, Tyr-357–Phe-377, Leu-431–Ile-451, Leu-476–Leu-496, and Phe-522–Trp-542.

Belongs to the OXA1/ALB3/YidC family. Type 1 subfamily. As to quaternary structure, interacts with the Sec translocase complex via SecD. Specifically interacts with transmembrane segments of nascent integral membrane proteins during membrane integration.

It is found in the cell inner membrane. Its function is as follows. Required for the insertion and/or proper folding and/or complex formation of integral membrane proteins into the membrane. Involved in integration of membrane proteins that insert both dependently and independently of the Sec translocase complex, as well as at least some lipoproteins. Aids folding of multispanning membrane proteins. The chain is Membrane protein insertase YidC from Rickettsia felis (strain ATCC VR-1525 / URRWXCal2) (Rickettsia azadi).